A 138-amino-acid chain; its full sequence is Acidic phospholipase A2 6 (138 aa).

A signal peptide spans 1 to 16 (MRTLWIMAVLLVGVEG). 7 disulfides stabilise this stretch: C42–C131, C44–C60, C59–C111, C65–C138, C66–C104, C73–C97, and C91–C102. Positions 43, 45, and 47 each coordinate Ca(2+). The active site involves H63. D64 is a Ca(2+) binding site. D105 is an active-site residue.

Belongs to the phospholipase A2 family. Group II subfamily. D49 sub-subfamily. In terms of assembly, homodimer. Ca(2+) is required as a cofactor. As to expression, expressed by the venom gland.

It is found in the secreted. The catalysed reaction is a 1,2-diacyl-sn-glycero-3-phosphocholine + H2O = a 1-acyl-sn-glycero-3-phosphocholine + a fatty acid + H(+). In terms of biological role, snake venom phospholipase A2 (PLA2) that has high lipolytic activity. PLA2 catalyzes the calcium-dependent hydrolysis of the 2-acyl groups in 3-sn-phosphoglycerides. This is Acidic phospholipase A2 6 from Craspedocephalus gramineus (Bamboo pit viper).